Here is a 447-residue protein sequence, read N- to C-terminus: MSRKYFGTDGIRGRVGESPITPDFVLRLGYAAGRVLAHGSEAHGHGRPTVLIGKDTRLSGYMLEAALEAGFTAAGVDVLMSGPLPTPGVAYLTRALRLSAGVVISASHNPYYDNGIKFFSATGDKLPDETESQIEAELEKPMVYAASDALGRARRIDDAAGRYIEFCKSTFPNDLNLFGMKIVLDSAHGAAYHIAPHVFHELGAEVVSIGNQPNGRNINDGYGATEPAKLIEATRQHGADLGLAFDGDADRLQVVDRNGRLYNGDELLYVMVQARRAAGQAVPGAVGTLMTNLAVELALKAQGVEFVRAKVGDRYVLEELKKHGWLLGGEGSGHLLCLDKHSTGDGIISALQVLAALRRSGQTLEQVLDGVHLFPQKLINVRVEKGFDWKAHAALQAALKVSEAELNGKGRVLIRPSGTEPVVRVMVEAQDAALATKYAEQLAATLQ.

The Phosphoserine intermediate role is filled by serine 107. Residues serine 107, aspartate 246, aspartate 248, and aspartate 250 each contribute to the Mg(2+) site. Phosphoserine is present on serine 107.

Belongs to the phosphohexose mutase family. The cofactor is Mg(2+). Post-translationally, activated by phosphorylation.

It carries out the reaction alpha-D-glucosamine 1-phosphate = D-glucosamine 6-phosphate. Functionally, catalyzes the conversion of glucosamine-6-phosphate to glucosamine-1-phosphate. This is Phosphoglucosamine mutase from Ralstonia nicotianae (strain ATCC BAA-1114 / GMI1000) (Ralstonia solanacearum).